Here is a 227-residue protein sequence, read N- to C-terminus: 2,3-bisphosphoglycerate-dependent phosphoglycerate mutase (227 aa).

Substrate-binding positions include 7-14, 20-21, arginine 59, 86-89, lysine 97, 113-114, and 182-183; these read RHGFSEWN, TG, ERHY, RR, and GN. The active-site Tele-phosphohistidine intermediate is histidine 8. Glutamate 86 functions as the Proton donor/acceptor in the catalytic mechanism.

This sequence belongs to the phosphoglycerate mutase family. BPG-dependent PGAM subfamily. In terms of assembly, homodimer.

The catalysed reaction is (2R)-2-phosphoglycerate = (2R)-3-phosphoglycerate. It participates in carbohydrate degradation; glycolysis; pyruvate from D-glyceraldehyde 3-phosphate: step 3/5. Functionally, catalyzes the interconversion of 2-phosphoglycerate and 3-phosphoglycerate. The sequence is that of 2,3-bisphosphoglycerate-dependent phosphoglycerate mutase from Haemophilus ducreyi (strain 35000HP / ATCC 700724).